Reading from the N-terminus, the 752-residue chain is GTPase-activating protein rrc-1 (752 aa).

The region spanning 165-244 (PAIAAAVVTK…PRDCVMLIDD (80 aa)) is the SH3 domain. One can recognise a Rho-GAP domain in the interval 281–463 (LELTELFMRT…FCIENSDSLF (183 aa)). Disordered regions lie at residues 523-552 (STGE…ATFQ) and 582-609 (RSMR…GANN).

In terms of biological role, functions as a GTPase-activating protein (GAP) for ced-10/RAC-1 and CDC42. In Caenorhabditis briggsae, this protein is GTPase-activating protein rrc-1.